Reading from the N-terminus, the 378-residue chain is MELQEVLHMNEGEGDTSYAKNASYNLALAKVKPFLEQCIRELLRANLPNINKCIKVADLGCASGPNTLLTVRDIVQSIDKVGQEEKNELERPTIQIFLNDLFQNDFNSVFKLLPSFYRKLEKENGRKIGSCLISAMPGSFYGRLFPEESMHFLHSCYSVHWLSQVPSGLVIELGIGANKGSIYSSKGCRPPVQKAYLDQFTKDFTTFLRIHSKELFSRGRMLLTCICKVDEFDEPNPLDLLDMAINDLIVEGLLEEEKLDSFNIPFFTPSAEEVKCIVEEEGSCEILYLETFKAHYDAAFSIDDDYPVRSHEQIKAEYVASLIRSVYEPILASHFGEAIMPDLFHRLAKHAAKVLHMGKGCYNNLIISLAKKPEKSDV.

Positions 18, 61, 66, 100, 101, 139, 140, and 156 each coordinate S-adenosyl-L-homocysteine. Theobromine is bound by residues Tyr-157, His-160, and Trp-161. Mg(2+)-binding residues include Asn-178, Asp-260, Phe-262, and Asn-263. Tyr-362 serves as a coordination point for theobromine.

This sequence belongs to the methyltransferase superfamily. Type-7 methyltransferase family. Mg(2+) serves as cofactor. Expressed, at low levels, in stems, young leaves, floral buds and immature fruits (grains), but not in roots, old leaves and mature fruits.

The protein resides in the cytoplasm. It catalyses the reaction 7-methylxanthine + S-adenosyl-L-methionine = theobromine + S-adenosyl-L-homocysteine + H(+). Its pathway is alkaloid biosynthesis. In terms of biological role, involved in the biosynthesis of caffeine. Catalyzes the conversion of 7-methylxanthine (7mX) to theobromine and of paraxanthine to caffeine. Has a 5-fold preference for 7mX. This is Monomethylxanthine methyltransferase 1 from Coffea arabica (Arabian coffee).